Here is a 95-residue protein sequence, read N- to C-terminus: Co-chaperonin GroES (95 aa).

Belongs to the GroES chaperonin family. Heptamer of 7 subunits arranged in a ring. Interacts with the chaperonin GroEL.

The protein resides in the cytoplasm. Together with the chaperonin GroEL, plays an essential role in assisting protein folding. The GroEL-GroES system forms a nano-cage that allows encapsulation of the non-native substrate proteins and provides a physical environment optimized to promote and accelerate protein folding. GroES binds to the apical surface of the GroEL ring, thereby capping the opening of the GroEL channel. This Xylella fastidiosa (strain M12) protein is Co-chaperonin GroES.